The sequence spans 164 residues: Large ribosomal subunit protein eL24z (164 aa).

Positions 117-133 are enriched in basic and acidic residues; that stretch reads ERIKKTKDEKKAKKVEY. Positions 117 to 164 are disordered; that stretch reads ERIKKTKDEKKAKKVEYASKQQKSQVKGNIPKSAAPKAAKMGGGGGRR.

This sequence belongs to the eukaryotic ribosomal protein eL24 family. As to quaternary structure, interacts with the cauliflower mosaic virus transactivator TAV to form a TAV/60S complex. Interacts with REIL1 AND REIL2.

In terms of biological role, might have an extraribosomal function in reinitiation of translation. This chain is Large ribosomal subunit protein eL24z (RPL24A), found in Arabidopsis thaliana (Mouse-ear cress).